The following is a 629-amino-acid chain: DNA ligase B (629 aa).

Residue Lys-151 is the N6-AMP-lysine intermediate of the active site. Polar residues predominate over residues 588–597 (LQKQHGTNTR). Residues 588–629 (LQKQHGTNTRNEQKGDVRRVDVKQDNGTTWLPEQDSNLRPND) form a disordered region. Residues 598 to 611 (NEQKGDVRRVDVKQ) are compositionally biased toward basic and acidic residues. A compositionally biased stretch (polar residues) spans 612-629 (DNGTTWLPEQDSNLRPND).

It belongs to the NAD-dependent DNA ligase family. LigB subfamily.

It catalyses the reaction NAD(+) + (deoxyribonucleotide)n-3'-hydroxyl + 5'-phospho-(deoxyribonucleotide)m = (deoxyribonucleotide)n+m + AMP + beta-nicotinamide D-nucleotide.. In terms of biological role, catalyzes the formation of phosphodiester linkages between 5'-phosphoryl and 3'-hydroxyl groups in double-stranded DNA using NAD as a coenzyme and as the energy source for the reaction. The protein is DNA ligase B of Chromohalobacter salexigens (strain ATCC BAA-138 / DSM 3043 / CIP 106854 / NCIMB 13768 / 1H11).